Here is a 968-residue protein sequence, read N- to C-terminus: MMDFLKRFFGSSQERILKRFQKLVEEVNACDEKFSSLSDDELREKTPQLKRRYQEGESLDKLLPEAYGIVKNVCRRLAGTPVEVSGYHQQWDMVPYDVQILGGIAMHKGFITEMQTGEGKTLTAVMPLYLNALTGKPVHLVTVNDYLAQRDCEWVGSVLRWLGLTTGVLVSGIPPERRKAIYQCDVVYGTASEFGFDYLRDNSIATRKEEQVGRGFYFAIIDEVDSVLIDEARTPLIISGPGEKHNPVYFELKDKVAELVHFQREMCNHIAAEARKTLDPFLGMDVLPKDRKIMEGISEACRALWLVSKGMPLNRVLRRVREHPDLRAMVDKWDVFYHAEQNKEECLERLSSLYIVVDEHNNDFELTDKGMQQWIEKIGGAAEDFVMMDMGHEYALIEEDTTLSPEDKLNRKIAVSEKDTQRKARAHGLRQLLRAHLLMERDIDYIVRDDQIVIIDEHTGRPQAGRRFSEGLHQAIEAKEHVTIRKESQTFATVTLQNFFRLYEKLAGMTGTAITESREFKEIYNLYVLQVPTFKPCLRIDHNDAFYMTEREKYQAIVAEIISAHRSGKPILIGTESVEVSEKLSRILRQNRIHHTVLNAKNHAQEAEIIAGAGKVGAVTVATNMAGRGTDIKLDKEAVAAGGLYVIGTSRHQSRRIDRQLRGRCARLGDPGAAKFFLSFEDRLMRLFASPKLNTLIRHFRPPEGEAMSDPMFDRLIETAQKRVEGRNYTIRKHTLEYDDVMNKQRQTIYAFRNDVLHADDLFIVAREQIEHVSLALAFLILKDARADHCSLPKVEEWLSYSFPVKLDDQEIRRLGNVDAVADYIGGLLIEAFDAKFSSMLTEFTEIIGSASGAQGVCNDILRSVIISHIDEEWKVHLMDMDLLRSEVGLRSVGQKDPLIEFKNESFLLFEGLIRDIRIAIVKHLFALELSLTRSDRPDNAIPTVATAFHNHDNFRPMELTIIGEEEN.

ATP-binding positions include glutamine 99, 117–121 (GEGKT), and aspartate 631.

This sequence belongs to the SecA family. As to quaternary structure, monomer and homodimer. Part of the essential Sec protein translocation apparatus which comprises SecA, SecYEG and auxiliary proteins SecDF. Other proteins may also be involved.

The protein resides in the cell inner membrane. It localises to the cytoplasm. It catalyses the reaction ATP + H2O + cellular proteinSide 1 = ADP + phosphate + cellular proteinSide 2.. Its function is as follows. Part of the Sec protein translocase complex. Interacts with the SecYEG preprotein conducting channel. Has a central role in coupling the hydrolysis of ATP to the transfer of proteins into and across the cell membrane, serving as an ATP-driven molecular motor driving the stepwise translocation of polypeptide chains across the membrane. The sequence is that of Protein translocase subunit SecA from Chlamydia muridarum (strain MoPn / Nigg).